The sequence spans 542 residues: Cytochrome P450 monooxygenase sdnH (542 aa).

A helical transmembrane segment spans residues 25–45 (LYVAGGILGAFTVYSIILVVY). The tract at residues 141–160 (IIPPRGLGQEDSIGSTRSHD) is disordered. A helical membrane pass occupies residues 340–360 (FMGAGTYPTAATLIFVAYYIL). Cysteine 483 is a heme binding site. A glycan (N-linked (GlcNAc...) asparagine) is linked at asparagine 506.

Belongs to the cytochrome P450 family. Requires heme as cofactor.

It is found in the membrane. It functions in the pathway antibiotic biosynthesis. In terms of biological role, cytochrome P450 monooxygenase; part of the gene cluster that mediates the biosynthesis of sordarin and hypoxysordarin, glycoside antibiotics with a unique tetracyclic diterpene aglycone structure. First, the geranylgeranyl diphosphate synthase sdnC constructs GGDP from farnesyl diphosphate and isopentenyl diphosphate. The diterpene cyclase sdnA then catalyzes the cyclization of GGDP to afford cycloaraneosene. Cycloaraneosene is then hydroxylated four times by the putative cytochrome P450 monooxygenases sdnB, sdnE, sdnF and sdnH to give a hydroxylated cycloaraneosene derivative such as cycloaraneosene-8,9,13,19-tetraol. Although the order of the hydroxylations is unclear, at least C8, C9 and C13 of the cycloaraneosene skeleton are hydroxylated before the sordaricin formation. Dehydration of the 13-hydroxy group of the hydroxylated cycloaraneosene derivative might be catalyzed by an unassigned hypothetical protein such as sdnG and sdnP to construct the cyclopentadiene moiety. The FAD-dependent oxidoreductase sdnN is proposed to catalyze the oxidation at C9 of the hydroxylated cycloaraneosene derivative and also catalyze the Baeyer-Villiger oxidation to give the lactone intermediate. The presumed lactone intermediate would be hydrolyzed to give an acrolein moiety and a carboxylate moiety. Then, [4+2]cycloaddition would occur between the acrolein moiety and the cyclopentadiene moiety to give sordaricin. SdnN might also be involved in the [4+2]cycloaddition after the hypothesized oxidation to accommodate the oxidized product and prompt the [4+2]cycloaddition. GDP-6-deoxy-D-altrose may be biosynthesized from GDP-D-mannose by the putative GDP-mannose-4,6-dehydratase sdnI and the short-chain dehydrogenase sdnK. The glycosyltransferase sdnJ catalyzes the attachment of 6-deoxy-D-altrose onto the 19-hydroxy group of sordaricin to give 4'-O-demethylsordarin. The methyltransferase sdnD would complete the biosynthesis of sordarin. Sordarin can be further modified into hypoxysordarin. The unique acyl chain at the 3'-hydroxy group of hypoxysordarin would be constructed by an iterative type I PKS sdnO and the trans-acting polyketide methyltransferase sdnL. SdnL would be responsible for the introduction of an alpha-methyl group of the polyketide chain. Alternatively, the beta-lactamase-like protein sdnR might be responsible for the cleavage and transfer of the polyketide chain from the PKS sdnO to sordarin. Two putative cytochrome P450 monooxygenases, sdnQ and sdnT, might catalyze the epoxidations of the polyketide chain to complete the biosynthesis of hypoxysordarin. Transcriptional regulators sdnM and sdnS are presumably encoded for the transcriptional regulation of the expression of the sdn gene cluster. The protein is Cytochrome P450 monooxygenase sdnH of Sordaria araneosa (Pleurage araneosa).